Consider the following 116-residue polypeptide: Large ribosomal subunit protein uL24 (116 aa).

Residues 1–21 (MATNNGAGKARHKFHVKKGDT) form a disordered region.

It belongs to the universal ribosomal protein uL24 family. Part of the 50S ribosomal subunit.

In terms of biological role, one of two assembly initiator proteins, it binds directly to the 5'-end of the 23S rRNA, where it nucleates assembly of the 50S subunit. Functionally, one of the proteins that surrounds the polypeptide exit tunnel on the outside of the subunit. This Gloeobacter violaceus (strain ATCC 29082 / PCC 7421) protein is Large ribosomal subunit protein uL24.